A 157-amino-acid polypeptide reads, in one-letter code: 2-C-methyl-D-erythritol 2,4-cyclodiphosphate synthase (157 aa).

D8 and H10 together coordinate a divalent metal cation. 4-CDP-2-C-methyl-D-erythritol 2-phosphate contacts are provided by residues 8–10 and 34–35; these read DVH and HS. An a divalent metal cation-binding site is contributed by H42. Residues 56–58, 61–65, 100–106, 132–135, F139, and R142 each bind 4-CDP-2-C-methyl-D-erythritol 2-phosphate; these read DIG, FPDTD, AQAPKMA, and TTTE.

Belongs to the IspF family. In terms of assembly, homotrimer. A divalent metal cation serves as cofactor.

It catalyses the reaction 4-CDP-2-C-methyl-D-erythritol 2-phosphate = 2-C-methyl-D-erythritol 2,4-cyclic diphosphate + CMP. Its pathway is isoprenoid biosynthesis; isopentenyl diphosphate biosynthesis via DXP pathway; isopentenyl diphosphate from 1-deoxy-D-xylulose 5-phosphate: step 4/6. Its function is as follows. Involved in the biosynthesis of isopentenyl diphosphate (IPP) and dimethylallyl diphosphate (DMAPP), two major building blocks of isoprenoid compounds. Catalyzes the conversion of 4-diphosphocytidyl-2-C-methyl-D-erythritol 2-phosphate (CDP-ME2P) to 2-C-methyl-D-erythritol 2,4-cyclodiphosphate (ME-CPP) with a corresponding release of cytidine 5-monophosphate (CMP). The polypeptide is 2-C-methyl-D-erythritol 2,4-cyclodiphosphate synthase (Pseudomonas aeruginosa (strain ATCC 15692 / DSM 22644 / CIP 104116 / JCM 14847 / LMG 12228 / 1C / PRS 101 / PAO1)).